Here is a 283-residue protein sequence, read N- to C-terminus: Pantothenate synthetase (283 aa).

Residue 30–37 (MGFLHEGH) participates in ATP binding. The Proton donor role is filled by histidine 37. Glutamine 61 is a (R)-pantoate binding site. Residue glutamine 61 coordinates beta-alanine. 147-150 (GKKD) contributes to the ATP binding site. Glutamine 153 contributes to the (R)-pantoate binding site. Residues valine 176 and 184 to 187 (MSSR) each bind ATP.

This sequence belongs to the pantothenate synthetase family. Homodimer.

The protein localises to the cytoplasm. The catalysed reaction is (R)-pantoate + beta-alanine + ATP = (R)-pantothenate + AMP + diphosphate + H(+). It functions in the pathway cofactor biosynthesis; (R)-pantothenate biosynthesis; (R)-pantothenate from (R)-pantoate and beta-alanine: step 1/1. In terms of biological role, catalyzes the condensation of pantoate with beta-alanine in an ATP-dependent reaction via a pantoyl-adenylate intermediate. The protein is Pantothenate synthetase of Trichlorobacter lovleyi (strain ATCC BAA-1151 / DSM 17278 / SZ) (Geobacter lovleyi).